The primary structure comprises 368 residues: MMMSNRVLVAMSGGVDSSVAALMLKEQGYEVIGAHMRIWYREEDEELYEQNVKGCCSLAAVHDAKRVADKIGIPFYVLNFKEPFYDWVVKNFIDEYLQGRTPNPCIACNRFIKWEEFLKRAMALECDYIATGHYSKIVYDNLKNRYLLYRGKDKTKDQSYMLSQLTQEQLARTLFPLGDYYKEDVRNIAEQNELGVADKPDSQEICFVPNNDYGEFLQSVVPEHINPGPILDAQGNKLGEHKGIAFYTIGQRRGLGISLGRPVYVIDIDADNNALIVGDKEELYSDGLIAEEINLIPYEQIENSIDIECKIRYNSRNVSSTLQPYGNDQLLVKFNQPVEAVTPGQGVTFYQDDLVIGGGTILKATTKK.

Residues 10-17 (AMSGGVDS) and Met36 each bind ATP. Cys108 acts as the Nucleophile in catalysis. Cys108 and Cys206 form a disulfide bridge. Gly132 serves as a coordination point for ATP. An interaction with tRNA region spans residues 156 to 158 (KDQ). Cys206 functions as the Cysteine persulfide intermediate in the catalytic mechanism. The tract at residues 312–313 (RY) is interaction with tRNA.

Belongs to the MnmA/TRMU family.

Its subcellular location is the cytoplasm. It carries out the reaction S-sulfanyl-L-cysteinyl-[protein] + uridine(34) in tRNA + AH2 + ATP = 2-thiouridine(34) in tRNA + L-cysteinyl-[protein] + A + AMP + diphosphate + H(+). Catalyzes the 2-thiolation of uridine at the wobble position (U34) of tRNA, leading to the formation of s(2)U34. This chain is tRNA-specific 2-thiouridylase MnmA, found in Natranaerobius thermophilus (strain ATCC BAA-1301 / DSM 18059 / JW/NM-WN-LF).